Consider the following 273-residue polypeptide: Hemin import ATP-binding protein HmuV (273 aa).

Positions 2–256 (LTAHHLDVAR…AHIAQCYGFA (255 aa)) constitute an ABC transporter domain. Position 34–41 (34–41 (GRNGAGKS)) interacts with ATP.

Belongs to the ABC transporter superfamily. Heme (hemin) importer (TC 3.A.1.14.5) family. The complex is composed of two ATP-binding proteins (HmuV), two transmembrane proteins (HmuU) and a solute-binding protein (HmuT).

The protein resides in the cell inner membrane. In terms of biological role, part of the ABC transporter complex HmuTUV involved in hemin import. Responsible for energy coupling to the transport system. This Burkholderia lata (strain ATCC 17760 / DSM 23089 / LMG 22485 / NCIMB 9086 / R18194 / 383) protein is Hemin import ATP-binding protein HmuV.